The sequence spans 213 residues: Adenylate kinase (213 aa).

Residue 14–19 (GSGKGT) participates in ATP binding. Residues 34-63 (STGDLLRAIIREGTPNGLKAKAYLDKGAFV) are NMP. Residues Thr35, Arg40, 61–63 (AFV), 89–92 (GFPR), and Gln96 contribute to the AMP site. Residues 129–162 (SRFLCPSCSRIYNTSQGHTECPDCHVPLIRRSDD) form an LID region. Arg130 provides a ligand contact to ATP. Residues Cys133 and Cys136 each coordinate Zn(2+). An ATP-binding site is contributed by 139–140 (IY). 2 residues coordinate Zn(2+): Cys149 and Cys152. Residues Arg159 and Arg170 each contribute to the AMP site. Residue Asn198 coordinates ATP.

This sequence belongs to the adenylate kinase family. Monomer.

The protein resides in the cytoplasm. It catalyses the reaction AMP + ATP = 2 ADP. The protein operates within purine metabolism; AMP biosynthesis via salvage pathway; AMP from ADP: step 1/1. Its function is as follows. Catalyzes the reversible transfer of the terminal phosphate group between ATP and AMP. Plays an important role in cellular energy homeostasis and in adenine nucleotide metabolism. This Chlamydia pneumoniae (Chlamydophila pneumoniae) protein is Adenylate kinase.